The following is a 376-amino-acid chain: MSGKSPAQTRVVVGMSGGVDSSVTALLLKEQGYDVIGVFMKNWDDTDENGVCTATEDYKDVAAVADQIGVPYYSVNFEKEYWDRVFEYFLAEYRAGRTPNPDVMCNKEIKFKAFLDYAMELGADYVATGHYAQVRTDEDGTVHMLRGADNNKDQTYFLSQLTQEQLKKTMFPLGHLEKPEVRRIAEKAGLATAKKKDSTGICFIGEKNFKKFLGEYLPAQPGKMMTLDGVEMGNHAGLMYYTIGQRGGLGIGGQHGQLTSDPWFVVGKDLTTNTLYVGQGFHHEHLYSTSLDASDLSFTREMPETFDLHCTAKFRYRQEDTGVTIHVKADKVTVDFDEPVRAITPGQAVVFYDGEECLGGAMIDVAYKEQKVMQYQ.

ATP-binding positions include 14–21 (GMSGGVDS) and M40. The interval 100–102 (NPD) is interaction with target base in tRNA. C105 acts as the Nucleophile in catalysis. A disulfide bridge links C105 with C202. Residue G129 participates in ATP binding. Residues 152-154 (KDQ) form an interaction with tRNA region. The active-site Cysteine persulfide intermediate is the C202. Residues 315–316 (RY) are interaction with tRNA.

The protein belongs to the MnmA/TRMU family.

It is found in the cytoplasm. It catalyses the reaction S-sulfanyl-L-cysteinyl-[protein] + uridine(34) in tRNA + AH2 + ATP = 2-thiouridine(34) in tRNA + L-cysteinyl-[protein] + A + AMP + diphosphate + H(+). Its function is as follows. Catalyzes the 2-thiolation of uridine at the wobble position (U34) of tRNA, leading to the formation of s(2)U34. This chain is tRNA-specific 2-thiouridylase MnmA, found in Lactococcus lactis subsp. cremoris (strain SK11).